Consider the following 159-residue polypeptide: Phosphopantetheine adenylyltransferase (159 aa).

A substrate-binding site is contributed by Thr-10. ATP-binding positions include 10–11 (TF) and His-18. Residues Lys-42, Met-74, and Arg-88 each coordinate substrate. ATP is bound by residues 89 to 91 (GLR), Glu-99, and 124 to 130 (WSFISSS).

Belongs to the bacterial CoaD family. As to quaternary structure, homohexamer. It depends on Mg(2+) as a cofactor.

The protein localises to the cytoplasm. The catalysed reaction is (R)-4'-phosphopantetheine + ATP + H(+) = 3'-dephospho-CoA + diphosphate. It functions in the pathway cofactor biosynthesis; coenzyme A biosynthesis; CoA from (R)-pantothenate: step 4/5. In terms of biological role, reversibly transfers an adenylyl group from ATP to 4'-phosphopantetheine, yielding dephospho-CoA (dPCoA) and pyrophosphate. The chain is Phosphopantetheine adenylyltransferase from Escherichia coli O7:K1 (strain IAI39 / ExPEC).